A 197-amino-acid polypeptide reads, in one-letter code: Probable GTP-binding protein EngB (197 aa).

Residues 22–197 (TGVEVAFAGR…FKEKLDTWYQ (176 aa)) enclose the EngB-type G domain. Residues 30–37 (GRSNAGKS), 57–61 (GRTQL), 75–78 (DLPG), 142–145 (TKAD), and 177–179 (FSS) each bind GTP. Positions 37 and 59 each coordinate Mg(2+).

This sequence belongs to the TRAFAC class TrmE-Era-EngA-EngB-Septin-like GTPase superfamily. EngB GTPase family. Mg(2+) serves as cofactor.

Necessary for normal cell division and for the maintenance of normal septation. The sequence is that of Probable GTP-binding protein EngB from Francisella tularensis subsp. tularensis (strain FSC 198).